A 150-amino-acid polypeptide reads, in one-letter code: Regulatory protein RecX (150 aa).

Belongs to the RecX family.

The protein resides in the cytoplasm. In terms of biological role, modulates RecA activity. This is Regulatory protein RecX from Ectopseudomonas mendocina (strain ymp) (Pseudomonas mendocina).